The chain runs to 194 residues: Large ribosomal subunit protein eL15 (194 aa).

Residues arginine 160–lysine 194 form a disordered region.

Belongs to the eukaryotic ribosomal protein eL15 family.

This Methanococcus maripaludis (strain C6 / ATCC BAA-1332) protein is Large ribosomal subunit protein eL15.